The primary structure comprises 372 residues: Serine protease 44 (372 aa).

The N-terminal stretch at 1 to 25 (MAFQGCDCFGLLVWLLLLQTRLGKA) is a signal peptide. Residues 26–351 (RMVPGTPSLS…KELSRASCWK (326 aa)) lie on the Extracellular side of the membrane. The interval 31 to 72 (TPSLSPLPSENGLDDSGVNPQERPLTGMPETSLPRKPGDSTR) is disordered. The 234-residue stretch at 112-345 (IVGGRPAPAR…YRDWIIKELS (234 aa)) folds into the Peptidase S1 domain. Residues cysteine 137 and cysteine 153 are joined by a disulfide bond. Active-site charge relay system residues include histidine 152 and aspartate 197. Asparagine 208 carries an N-linked (GlcNAc...) asparagine glycan. Cystine bridges form between cysteine 231-cysteine 303, cysteine 262-cysteine 283, and cysteine 293-cysteine 321. The active-site Charge relay system is the serine 297. Residues 352-372 (LSGFLVLSVCLVLHLAIVVAL) form a helical membrane-spanning segment.

The protein belongs to the peptidase S1 family. As to expression, testis-specific. Expressed by primary and secondary spermatocytes.

It is found in the membrane. The protein resides in the cytoplasm. Functionally, lacks protease activity in vitro. This chain is Serine protease 44, found in Mus musculus (Mouse).